A 2604-amino-acid chain; its full sequence is BEACH domain-containing protein B (2604 aa).

One can recognise a BEACH-type PH domain in the interval 1761-1912 (VGTSEVLTSV…NAKEVGMLIV (152 aa)). One can recognise a BEACH domain in the interval 1936–2226 (DRRIAMEMAE…QIFRKKHPRR (291 aa)). 6 WD repeats span residues 2254–2293 (HSPS…SGGN), 2368–2407 (HHKD…TPEK), 2433–2474 (GHDD…RSLK), 2476–2515 (PSGS…LASS), 2516–2557 (ESNG…KRYN), and 2558–2596 (GAGK…HRKP).

In terms of biological role, may be involved in the suppression of BCHC1 activity. The polypeptide is BEACH domain-containing protein B (Arabidopsis thaliana (Mouse-ear cress)).